The chain runs to 548 residues: Probable nuclear hormone receptor HR3 (548 aa).

The disordered stretch occupies residues 1–27 (MNNNQFHELFGSQWPPDQHGGHSSAST). A DNA-binding region (nuclear receptor) is located at residues 101 to 176 (IIPCKVCGDK…LGMSRDAVKF (76 aa)). 2 consecutive NR C4-type zinc fingers follow at residues 104–124 (CKVCGDKSSGVHYGVITCEGC) and 140–164 (CPRNKACVVDRVNRNRCQYCRLQKC). The segment at 198–228 (MRAQNDAAPDSVYDAQQQTPSSSDQFHGHYN) is disordered. Residues 211 to 222 (DAQQQTPSSSDQ) are compositionally biased toward polar residues. The region spanning 295-539 (ISKVLVKSLA…PALYKELFSL (245 aa)) is the NR LBD domain.

This sequence belongs to the nuclear hormone receptor family. NR1 subfamily.

It is found in the nucleus. Its function is as follows. Putative receptor whose ligand is not yet known. The protein is Probable nuclear hormone receptor HR3 (HR3) of Manduca sexta (Tobacco hawkmoth).